A 343-amino-acid chain; its full sequence is N-acetyl-gamma-glutamyl-phosphate reductase (343 aa).

Residue Cys-147 is part of the active site.

This sequence belongs to the NAGSA dehydrogenase family. Type 1 subfamily.

It is found in the cytoplasm. The enzyme catalyses N-acetyl-L-glutamate 5-semialdehyde + phosphate + NADP(+) = N-acetyl-L-glutamyl 5-phosphate + NADPH + H(+). It participates in amino-acid biosynthesis; L-arginine biosynthesis; N(2)-acetyl-L-ornithine from L-glutamate: step 3/4. In terms of biological role, catalyzes the NADPH-dependent reduction of N-acetyl-5-glutamyl phosphate to yield N-acetyl-L-glutamate 5-semialdehyde. The protein is N-acetyl-gamma-glutamyl-phosphate reductase of Listeria monocytogenes serovar 1/2a (strain ATCC BAA-679 / EGD-e).